The sequence spans 424 residues: Probable biofilm formation methyltransferase WspC (424 aa).

The CheR-type methyltransferase domain maps to 1–263 (MNEQRFFRFL…IAQSFAYVRH (263 aa)). S-adenosyl-L-methionine contacts are provided by residues T68, R72, E109, D133, 187–188 (NV), and 206–207 (RN). Residues 355-388 (AQVYYWLGLLSDTEGDAQQALSHYRKALYLEPQH) form a TPR repeat.

As to quaternary structure, monomer. The TPR repeat does not mediate self-association.

In terms of biological role, involved in biofilm formation. The protein is Probable biofilm formation methyltransferase WspC (wspC) of Pseudomonas putida (strain ATCC 47054 / DSM 6125 / CFBP 8728 / NCIMB 11950 / KT2440).